Reading from the N-terminus, the 93-residue chain is Putative pterin-4-alpha-carbinolamine dehydratase (93 aa).

It belongs to the pterin-4-alpha-carbinolamine dehydratase family.

The enzyme catalyses (4aS,6R)-4a-hydroxy-L-erythro-5,6,7,8-tetrahydrobiopterin = (6R)-L-erythro-6,7-dihydrobiopterin + H2O. In Trichormus variabilis (strain ATCC 29413 / PCC 7937) (Anabaena variabilis), this protein is Putative pterin-4-alpha-carbinolamine dehydratase.